The primary structure comprises 136 residues: Ergosterol biosynthetic protein 28 (136 aa).

Transmembrane regions (helical) follow at residues 18 to 34 (VVVSVAALFNTVQSFLT), 56 to 72 (FGIWTLLSAIVRFYCAY), 79 to 95 (VYFLCQCTYYLACFHFL), and 109 to 125 (GLLSPIVVSTVSIWFMA).

The protein belongs to the ERG28 family. Heterotetramer of erg25, erg26, erg27 and erg28. Erg28 acts as a scaffold to tether erg27 and other 4,4-demethylation-related enzymes, forming a demethylation enzyme complex, in the endoplasmic reticulum.

The protein localises to the endoplasmic reticulum membrane. Its pathway is steroid metabolism; ergosterol biosynthesis. Part of the third module of ergosterol biosynthesis pathway that includes by the late steps of the pathway. Erg28 has a role as a scaffold to help anchor the catalytic components of the C-4 demethylation complex erg25, erg26 and erg27 to the endoplasmic reticulum. The third module or late pathway involves the ergosterol synthesis itself through consecutive reactions that mainly occur in the endoplasmic reticulum (ER) membrane. Firstly, the squalene synthase erg9 catalyzes the condensation of 2 farnesyl pyrophosphate moieties to form squalene, which is the precursor of all steroids. Secondly, squalene is converted into lanosterol by the consecutive action of the squalene epoxidase erg1 and the lanosterol synthase erg7. The lanosterol 14-alpha-demethylase erg11/cyp1 catalyzes C14-demethylation of lanosterol to produce 4,4'-dimethyl cholesta-8,14,24-triene-3-beta-ol. In the next steps, a complex process involving various demethylation, reduction and desaturation reactions catalyzed by the C-14 reductase erg24 and the C-4 demethylation complex erg25-erg26-erg27 leads to the production of zymosterol. Erg28 likely functions in the C-4 demethylation complex reaction by tethering erg26 and Erg27 to the endoplasmic reticulum or to facilitate interaction between these proteins. Then, the sterol 24-C-methyltransferase erg6 catalyzes the methyl transfer from S-adenosyl-methionine to the C-24 of zymosterol to form fecosterol. The C-8 sterol isomerase erg2 catalyzes the reaction which results in unsaturation at C-7 in the B ring of sterols and thus converts fecosterol to episterol. The sterol-C5-desaturases erg31 and erg32 then catalyze the introduction of a C-5 double bond in the B ring to produce 5-dehydroepisterol. The C-22 sterol desaturase erg5 further converts 5-dehydroepisterol into ergosta-5,7,22,24(28)-tetraen-3beta-ol by forming the C-22(23) double bond in the sterol side chain. Finally, ergosta-5,7,22,24(28)-tetraen-3beta-ol is substrate of the C-24(28) sterol reductase erg4 to produce ergosterol. In the genus Schizosaccharomyces, a second route exists between lanosterol and fecosterol, via the methylation of lanosterol to eburicol by erg6, followed by C14-demethylation by erg11/cyp1 and C4-demethylation by the demethylation complex erg25-erg26-erg27. Its function is as follows. Extends the chronological lifespan when overexpressed. This chain is Ergosterol biosynthetic protein 28, found in Schizosaccharomyces pombe (strain 972 / ATCC 24843) (Fission yeast).